We begin with the raw amino-acid sequence, 183 residues long: NADH-quinone oxidoreductase subunit I (183 aa).

4Fe-4S ferredoxin-type domains are found at residues L44–G74 and R90–E119. The [4Fe-4S] cluster site is built by C54, C57, C60, C64, C99, C102, C105, and C109. The tract at residues Q143–Q183 is disordered. Over residues R153–E176 the composition is skewed to basic and acidic residues.

This sequence belongs to the complex I 23 kDa subunit family. In terms of assembly, NDH-1 is composed of 14 different subunits. Subunits NuoA, H, J, K, L, M, N constitute the membrane sector of the complex. It depends on [4Fe-4S] cluster as a cofactor.

Its subcellular location is the cell membrane. It carries out the reaction a quinone + NADH + 5 H(+)(in) = a quinol + NAD(+) + 4 H(+)(out). Its function is as follows. NDH-1 shuttles electrons from NADH, via FMN and iron-sulfur (Fe-S) centers, to quinones in the respiratory chain. The immediate electron acceptor for the enzyme in this species is believed to be ubiquinone. Couples the redox reaction to proton translocation (for every two electrons transferred, four hydrogen ions are translocated across the cytoplasmic membrane), and thus conserves the redox energy in a proton gradient. In Thermobifida fusca (strain YX), this protein is NADH-quinone oxidoreductase subunit I.